The sequence spans 245 residues: 1-(5-phosphoribosyl)-5-[(5-phosphoribosylamino)methylideneamino] imidazole-4-carboxamide isomerase (245 aa).

D10 (proton acceptor) is an active-site residue. D135 functions as the Proton donor in the catalytic mechanism.

This sequence belongs to the HisA/HisF family.

The protein localises to the cytoplasm. The enzyme catalyses 1-(5-phospho-beta-D-ribosyl)-5-[(5-phospho-beta-D-ribosylamino)methylideneamino]imidazole-4-carboxamide = 5-[(5-phospho-1-deoxy-D-ribulos-1-ylimino)methylamino]-1-(5-phospho-beta-D-ribosyl)imidazole-4-carboxamide. The protein operates within amino-acid biosynthesis; L-histidine biosynthesis; L-histidine from 5-phospho-alpha-D-ribose 1-diphosphate: step 4/9. The chain is 1-(5-phosphoribosyl)-5-[(5-phosphoribosylamino)methylideneamino] imidazole-4-carboxamide isomerase from Methanosarcina barkeri (strain Fusaro / DSM 804).